Here is a 331-residue protein sequence, read N- to C-terminus: NADH-quinone oxidoreductase subunit H (331 aa).

Helical transmembrane passes span 6–26 (FFIV…ATLA), 45–65 (GPWM…IKLF), 78–98 (FIFL…MSVI), 120–140 (IGIL…LIGG), 167–187 (GLSL…DIVH), 193–213 (ITSW…IAAF), 241–261 (MRWG…SIVI), 263–283 (LIFL…MIFL), and 311–331 (CWKI…FVII).

Belongs to the complex I subunit 1 family. In terms of assembly, NDH-1 is composed of 14 different subunits. Subunits NuoA, H, J, K, L, M, N constitute the membrane sector of the complex.

It localises to the cell inner membrane. It carries out the reaction a quinone + NADH + 5 H(+)(in) = a quinol + NAD(+) + 4 H(+)(out). NDH-1 shuttles electrons from NADH, via FMN and iron-sulfur (Fe-S) centers, to quinones in the respiratory chain. The immediate electron acceptor for the enzyme in this species is believed to be ubiquinone. Couples the redox reaction to proton translocation (for every two electrons transferred, four hydrogen ions are translocated across the cytoplasmic membrane), and thus conserves the redox energy in a proton gradient. This subunit may bind ubiquinone. This Campylobacter hominis (strain ATCC BAA-381 / DSM 21671 / CCUG 45161 / LMG 19568 / NCTC 13146 / CH001A) protein is NADH-quinone oxidoreductase subunit H.